The sequence spans 145 residues: Transcription antitermination protein NusB (145 aa).

Belongs to the NusB family.

Involved in transcription antitermination. Required for transcription of ribosomal RNA (rRNA) genes. Binds specifically to the boxA antiterminator sequence of the ribosomal RNA (rrn) operons. The polypeptide is Transcription antitermination protein NusB (Paraburkholderia phymatum (strain DSM 17167 / CIP 108236 / LMG 21445 / STM815) (Burkholderia phymatum)).